Consider the following 376-residue polypeptide: Fibromodulin (376 aa).

The first 18 residues, 1-18 (MQWASVLLLAGLCSLSQG), serve as a signal peptide directing secretion. Glutamine 19 carries the post-translational modification Pyrrolidone carboxylic acid. Sulfotyrosine is present on residues tyrosine 20, tyrosine 38, tyrosine 53, tyrosine 55, tyrosine 63, and tyrosine 65. The LRRNT domain maps to 67–105 (APPPPEPRDCPQECDCPPNFPTAMYCDNRNLKYLPFVPS). 8 LRR repeats span residues 106–127 (RMKYVYFQNNQISAIQEGVFDN), 130–151 (GLLWVALHGNQITSDKVGRKVF), 156–176 (HLERLYLDHNNLTRMPGPLPR), 177–198 (SLRELHLDHNQISRVPNNALEG), 201–222 (NLTALYLHHNEIQEVGSSMRGL), 224–245 (SLILLDLSYNHLRRVPDGLPSA), 246–266 (LEQLYLEHNNVYTVPDSYFRG), and 269–289 (KLLYVRLSHNSLTNNGLATNT). The N-linked (GlcNAc...) (keratan sulfate) asparagine glycan is linked to asparagine 127. A glycan (N-linked (GlcNAc...) (keratan sulfate) asparagine) is linked at asparagine 166. The N-linked (GlcNAc...) (keratan sulfate) asparagine glycan is linked to asparagine 201. Asparagine 291 is a glycosylation site (N-linked (GlcNAc...) (keratan sulfate) asparagine). 2 LRR repeats span residues 294–315 (SLLELDLSYNQLQKIPPVNTNL) and 316–335 (ENLYLQGNRINEFSISSFCT). Cysteines 334 and 367 form a disulfide. The N-linked (GlcNAc...) asparagine glycan is linked to asparagine 341. An LRR 11 repeat occupies 344-367 (KLQVLRLDGNEIKRSAMPVDAPLC).

It belongs to the small leucine-rich proteoglycan (SLRP) family. SLRP class II subfamily. As to quaternary structure, binds to type I and type II collagen. Binds keratan sulfate chains. In terms of processing, sulfated on tyrosine residue(s). Highest levels observed in knee epiphysis, in calvarial and diaphyseal bone, in nasal and costal cartilage, in the eye, and in bladder. In mature knee joint it is mostly present in the proliferating zone of growth plate. It is also observed in ligaments, especially at insertion sites, in the junction between meniscus and joint capsule, in the perimysium of skeletal muscle and in the periosteum.

Its subcellular location is the secreted. It is found in the extracellular space. It localises to the extracellular matrix. Functionally, affects the rate of fibrils formation. May have a primary role in collagen fibrillogenesis. This is Fibromodulin (Fmod) from Mus musculus (Mouse).